A 262-amino-acid chain; its full sequence is 3-methyl-2-oxobutanoate hydroxymethyltransferase (262 aa).

Mg(2+)-binding residues include aspartate 44 and aspartate 83. 3-methyl-2-oxobutanoate-binding positions include 44–45 (DS), aspartate 83, and lysine 111. Position 113 (glutamate 113) interacts with Mg(2+). The active-site Proton acceptor is glutamate 180.

This sequence belongs to the PanB family. Homodecamer; pentamer of dimers. Requires Mg(2+) as cofactor.

It is found in the cytoplasm. The catalysed reaction is 3-methyl-2-oxobutanoate + (6R)-5,10-methylene-5,6,7,8-tetrahydrofolate + H2O = 2-dehydropantoate + (6S)-5,6,7,8-tetrahydrofolate. It participates in cofactor biosynthesis; (R)-pantothenate biosynthesis; (R)-pantoate from 3-methyl-2-oxobutanoate: step 1/2. Functionally, catalyzes the reversible reaction in which hydroxymethyl group from 5,10-methylenetetrahydrofolate is transferred onto alpha-ketoisovalerate to form ketopantoate. This chain is 3-methyl-2-oxobutanoate hydroxymethyltransferase, found in Alcanivorax borkumensis (strain ATCC 700651 / DSM 11573 / NCIMB 13689 / SK2).